We begin with the raw amino-acid sequence, 385 residues long: Benzoylsuccinyl-CoA thiolase subunit BbsB (385 aa).

Arginine 19 is a binding site for CoA. Cysteine 84 serves as the catalytic Acyl-thioester intermediate. Positions 121, 193, 204, and 205 each coordinate CoA.

Belongs to the thiolase-like superfamily. Thiolase family. As to quaternary structure, heterotetramer composed of two BbsA subunits and two BbsB subunits. BbsB forms homodimeric subcomplexes. Both BbsA and BbsB are essential for enzymatic activity.

The catalysed reaction is (S)-2-benzoylsuccinyl-CoA + CoA = benzoyl-CoA + succinyl-CoA. Its pathway is xenobiotic degradation; toluene degradation. Component of the BbsAB thiolase complex, which catalyzes the thiolytic cleavage of (S)-2-benzoylsuccinyl-CoA to succinyl-CoA and benzoyl-CoA, the final step of anaerobic toluene metabolism. The sequence is that of Benzoylsuccinyl-CoA thiolase subunit BbsB from Thauera aromatica.